The sequence spans 169 residues: Ribosome maturation factor RimP (169 aa).

Belongs to the RimP family.

The protein localises to the cytoplasm. Functionally, required for maturation of 30S ribosomal subunits. The sequence is that of Ribosome maturation factor RimP from Koribacter versatilis (strain Ellin345).